Reading from the N-terminus, the 243-residue chain is Geranylgeranylglyceryl phosphate synthase (243 aa).

Residues D22 and S51 each contribute to the Mg(2+) site. Residues Y169–G175, G200–G201, and G222–T223 contribute to the sn-glycerol 1-phosphate site.

Belongs to the GGGP/HepGP synthase family. Group II subfamily. It depends on Mg(2+) as a cofactor.

The protein localises to the cytoplasm. It carries out the reaction sn-glycerol 1-phosphate + (2E,6E,10E)-geranylgeranyl diphosphate = sn-3-O-(geranylgeranyl)glycerol 1-phosphate + diphosphate. The protein operates within membrane lipid metabolism; glycerophospholipid metabolism. Prenyltransferase that catalyzes the transfer of the geranylgeranyl moiety of geranylgeranyl diphosphate (GGPP) to the C3 hydroxyl of sn-glycerol-1-phosphate (G1P). This reaction is the first ether-bond-formation step in the biosynthesis of archaeal membrane lipids. This is Geranylgeranylglyceryl phosphate synthase from Methanosphaera stadtmanae (strain ATCC 43021 / DSM 3091 / JCM 11832 / MCB-3).